A 93-amino-acid polypeptide reads, in one-letter code: DNA-directed RNA polymerase subunit omega (93 aa).

It belongs to the RNA polymerase subunit omega family. As to quaternary structure, the RNAP catalytic core consists of 2 alpha, 1 beta, 1 beta' and 1 omega subunit. When a sigma factor is associated with the core the holoenzyme is formed, which can initiate transcription.

It catalyses the reaction RNA(n) + a ribonucleoside 5'-triphosphate = RNA(n+1) + diphosphate. Promotes RNA polymerase assembly. Latches the N- and C-terminal regions of the beta' subunit thereby facilitating its interaction with the beta and alpha subunits. This is DNA-directed RNA polymerase subunit omega from Actinobacillus pleuropneumoniae serotype 3 (strain JL03).